We begin with the raw amino-acid sequence, 304 residues long: DCN1-like protein 3 (304 aa).

Disordered stretches follow at residues 1–86 (MGQC…AEES) and 284–304 (EGEG…EEQT). The N-myristoyl glycine moiety is linked to residue glycine 2. Residues 86-278 (SSLQRLEELF…LFDTFVEWEM (193 aa)) form the DCUN1 domain.

Part of a complex containing DCUN1D3, CUL3 and RBX1. Interacts (via the DCUN1 domain) with the unneddylated cullins: interacts with CUL1, CUL2, CUL3, CUL4A, CUL4B and CUL5; these interactions promote the cullin neddylation and the identity of the cullin dictates the affinity of the interaction. Interacts preferentially with CUL3; this interaction triggers the relocalization of CUL3 to the cell membrane where CUL3 is neddylated. Interacts (via DCUN1 domain) with RBX1. May also interact with regulators or subunits of cullin-RING ligases such as RNF7, ELOB and DDB1; these interactions are bridged by cullins. Interacts (via DCUN1 domain) with CAND1; this interaction is bridged by cullins and strongly inhibits cullin neddylation. These CAND-cullin-DCNL complexes can only be neddylated in the presence of a substrate adapter. Interacts (via DCUN1 domain) with the N-terminally acetylated form of UBE2M and UBE2F.

The protein resides in the cell membrane. Its subcellular location is the cytoplasm. It is found in the nucleus. It localises to the perinuclear region. Contributes to the neddylation of all cullins by transferring NEDD8 from N-terminally acetylated NEDD8-conjugating E2s enzyme to different cullin C-terminal domain-RBX complexes and may play a role in the cell cycle progression by regulating the SCF ubiquitin E3 ligase complex, after UV damage. At the cell membrane, can promote and as well inhibit cullins neddylation. The polypeptide is DCN1-like protein 3 (Pongo abelii (Sumatran orangutan)).